Reading from the N-terminus, the 242-residue chain is Uridylate kinase (242 aa).

11-14 (KLSG) is a binding site for ATP. Gly-53 is a UMP binding site. 2 residues coordinate ATP: Gly-54 and Arg-58. UMP is bound by residues Asp-73 and 134-141 (SGNPFFTT). Residues Thr-161, Tyr-167, and Asp-170 each contribute to the ATP site.

It belongs to the UMP kinase family. Homohexamer.

The protein resides in the cytoplasm. The catalysed reaction is UMP + ATP = UDP + ADP. Its pathway is pyrimidine metabolism; CTP biosynthesis via de novo pathway; UDP from UMP (UMPK route): step 1/1. With respect to regulation, inhibited by UTP. Functionally, catalyzes the reversible phosphorylation of UMP to UDP. The polypeptide is Uridylate kinase (Thermosynechococcus vestitus (strain NIES-2133 / IAM M-273 / BP-1)).